The primary structure comprises 224 residues: 7-cyano-7-deazaguanine synthase (224 aa).

Residue 8–18 coordinates ATP; sequence LSGGMDSAAVI. Zn(2+) is bound by residues Cys186, Cys196, Cys199, and Cys202.

This sequence belongs to the QueC family. It depends on Zn(2+) as a cofactor.

The enzyme catalyses 7-carboxy-7-deazaguanine + NH4(+) + ATP = 7-cyano-7-deazaguanine + ADP + phosphate + H2O + H(+). Its pathway is purine metabolism; 7-cyano-7-deazaguanine biosynthesis. Functionally, catalyzes the ATP-dependent conversion of 7-carboxy-7-deazaguanine (CDG) to 7-cyano-7-deazaguanine (preQ(0)). This is 7-cyano-7-deazaguanine synthase from Xanthomonas campestris pv. campestris (strain 8004).